The following is a 419-amino-acid chain: DNA polymerase IV (419 aa).

Residues 12–193 (IFHIDMNCFY…MSVEEMYGIG (182 aa)) enclose the UmuC domain. The Mg(2+) site is built by aspartate 16 and aspartate 112. The active site involves glutamate 113. Residues 388 to 419 (IITSQKNKNESQENQQPRTSFQKDFLDDYKKP) form a disordered region.

This sequence belongs to the DNA polymerase type-Y family. Monomer. The cofactor is Mg(2+).

It is found in the cytoplasm. The enzyme catalyses DNA(n) + a 2'-deoxyribonucleoside 5'-triphosphate = DNA(n+1) + diphosphate. In terms of biological role, poorly processive, error-prone DNA polymerase involved in untargeted mutagenesis. Copies undamaged DNA at stalled replication forks, which arise in vivo from mismatched or misaligned primer ends. These misaligned primers can be extended by PolIV. Exhibits no 3'-5' exonuclease (proofreading) activity. May be involved in translesional synthesis, in conjunction with the beta clamp from PolIII. This chain is DNA polymerase IV, found in Oceanobacillus iheyensis (strain DSM 14371 / CIP 107618 / JCM 11309 / KCTC 3954 / HTE831).